The chain runs to 576 residues: Coilin (576 aa).

Ser-105 bears the Phosphoserine mark. Thr-122 carries the phosphothreonine modification. Disordered stretches follow at residues 125-330 (DCKY…CLMS) and 352-389 (RPGP…SLPA). Glycyl lysine isopeptide (Lys-Gly) (interchain with G-Cter in SUMO2) cross-links involve residues Lys-127, Lys-151, and Lys-160. Phosphoserine; by VRK1 and VRK2 is present on Ser-184. Glycyl lysine isopeptide (Lys-Gly) (interchain with G-Cter in SUMO2) cross-links involve residues Lys-204 and Lys-209. The segment covering 214 to 225 (QRCSSPKGSARN) has biased composition (polar residues). One copy of the 1-1 repeat lies at 223–226 (ARNS). The segment at 223–271 (ARNSLVKAKRKGSVSVCSKESPSSSSESESCDESISDGPSKVTLEARNS) is 2 X 4 AA repeats of A-R-N-S. The span at 235-250 (SVSVCSKESPSSSSES) shows a compositional bias: low complexity. 5 positions are modified to phosphoserine: Ser-248, Ser-250, Ser-256, Ser-271, and Ser-272. One copy of the 1-2 repeat lies at 268-271 (ARNS). Residues 270 to 285 (NSSEKLPTELSKEEPS) are compositionally biased toward basic and acidic residues. Glycyl lysine isopeptide (Lys-Gly) (interchain with G-Cter in SUMO2) cross-links involve residues Lys-274 and Lys-281. A Phosphothreonine modification is found at Thr-290. Glycyl lysine isopeptide (Lys-Gly) (interchain with G-Cter in SUMO2) cross-links involve residues Lys-293 and Lys-297. Ser-301 carries the phosphoserine modification. The segment covering 301-320 (SLTPSKGKTSGTTSSSSDSS) has biased composition (low complexity). At Thr-303 the chain carries Phosphothreonine. The 2-1 repeat unit spans residues 386 to 389 (SLPA). The segment at 386–520 (SLPASLGRGW…DIEILSSLPA (135 aa)) is 2 X 4 AA repeats of S-L-P-A. The required for interaction with SMN stretch occupies residues 392–420 (GRGWGREENLFSWKGAKGRGMRGRGRGRG). Ser-403 bears the Phosphoserine mark. 4 tandem repeats follow at residues 413–414 (RG), 415–416 (RG), 417–418 (RG), and 419–420 (RG). The segment at 413–420 (RGRGRGRG) is 4 X 2 AA tandem repeats of R-G. Lys-444 participates in a covalent cross-link: Glycyl lysine isopeptide (Lys-Gly) (interchain with G-Cter in SUMO2). Residue Thr-456 is modified to Phosphothreonine. A Tudor; atypical domain is found at 460-559 (DYSLLPLLAA…ITVFWKELID (100 aa)). Residues Ser-487 and Ser-489 each carry the phosphoserine modification. Lys-496 participates in a covalent cross-link: Glycyl lysine isopeptide (Lys-Gly) (interchain with G-Cter in SUMO2). Residues 517-520 (SLPA) form a 2-2 repeat. At Ser-566 the chain carries Phosphoserine.

The protein belongs to the coilin family. Interacts with ANKS1B. Interacts with SMN1 (via Tudor domain). Interacts (via C-terminus) with AK6. Interacts with WRAP53/TCAB1. Interacts with HMBOX1. Interacts with PSME3; the interaction is inhibited by PSME3IP1. Interacts wit UBL5. Symmetrical dimethylation of arginine residues within the RG repeat region enhances affinity for SMN, and thus localization of SMN complexes to CBs. Post-translationally, phosphorylated by VRK1. Phosphorylation during mitosis is associated with disassembly of CBs. As to expression, found in all the cell types examined.

It is found in the nucleus. The protein localises to the cajal body. In terms of biological role, component of nuclear coiled bodies, also known as Cajal bodies or CBs, which are involved in the modification and assembly of nucleoplasmic snRNPs. This Homo sapiens (Human) protein is Coilin (COIL).